The following is a 640-amino-acid chain: MTPNGYLIFEDESFLDSTVAKMNALRKSGQFCDVRLLVCGHELMAHKAVLACCSPYLFEIFNADTEPQGGVSLVKFDDLNPDAMEVLLNYAYTAQLKADKSLVSDVYSAAKKLKLERVKQICGEYLLSKMDSQSAISYRNFASSMADGRLLGKIDGYIQDHLHEISEQDDFLKLPRLKLEVMLEDNLNLPGNGKLYSKVISWVQRSLWKNGDPLEKLMEEVQTLYYSADHKLHDGSLLEGQAEVCSTEDDHIQFVQKKPPRERDEMGSGASGSISPSNSQFNKHEWKYIASEKTTSNSYLCLAVLRGLLCVISLHGRTSPHNSPSATPCVLKSPNFEAQLEDLQEKLLKPMHYARSGLGTAELDCKLIAAGGYNREECLRTVECYDPKKDCWTFIAPMRTPRARFQMAVLMGEVYVMGGSNGHSDELSCGEMYNPRADEWIQVPELRTNRCNAGVCSLQNKLFVVGGSDPCGQKGLKNCDSFDPVTKMWTSCAPLNIKRHQAAVCELSGYMYVIGGAESWNCLNSVERYNPENNTWTLVASMNVARRGAGVAVYEGKLFVVGGFDGSHALRCVEVYDPATNEWRMLGSMTSARSNAGLAVLNNVLCAVGGFDGNEFLNSMEVYNLEKNEWSPFIEALGKN.

A BTB domain is found at 32–100 (CDVRLLVCGH…AYTAQLKADK (69 aa)). The 52-residue stretch at 135 to 186 (AISYRNFASSMADGRLLGKIDGYIQDHLHEISEQDDFLKLPRLKLEVMLEDN) folds into the BACK domain. The disordered stretch occupies residues 257-278 (KKPPRERDEMGSGASGSISPSN). Residues 267–278 (GSGASGSISPSN) are compositionally biased toward low complexity. 6 Kelch repeats span residues 366-412 (KLIA…VLMG), 413-460 (EVYV…SLQN), 462-509 (LFVV…ELSG), 510-556 (YMYV…VYEG), 557-603 (KLFV…VLNN), and 605-640 (LCAV…LGKN).

It localises to the cytoplasm. The protein resides in the cytoskeleton. Its subcellular location is the nucleus. Functionally, plays a role in cell division and in the dynamic organization of the actin skeleton as a stabilizer of actin filaments by association with F-actin through Kelch repeats. The sequence is that of Influenza virus NS1A-binding protein homolog B (ivns1abpb) from Danio rerio (Zebrafish).